Reading from the N-terminus, the 162-residue chain is ATP synthase subunit b', chloroplastic (162 aa).

Residues 26-46 (ATLPLQALQFILLTVLLTFIF) traverse the membrane as a helical segment.

Belongs to the ATPase B chain family. In terms of assembly, F-type ATPases have 2 components, F(1) - the catalytic core - and F(0) - the membrane proton channel. F(1) has five subunits: alpha(3), beta(3), gamma(1), delta(1), epsilon(1). F(0) has four main subunits: a(1), b(1), b'(1) and c(10-14). The alpha and beta chains form an alternating ring which encloses part of the gamma chain. F(1) is attached to F(0) by a central stalk formed by the gamma and epsilon chains, while a peripheral stalk is formed by the delta, b and b' chains.

It localises to the plastid. The protein resides in the chloroplast thylakoid membrane. Functionally, f(1)F(0) ATP synthase produces ATP from ADP in the presence of a proton or sodium gradient. F-type ATPases consist of two structural domains, F(1) containing the extramembraneous catalytic core and F(0) containing the membrane proton channel, linked together by a central stalk and a peripheral stalk. During catalysis, ATP synthesis in the catalytic domain of F(1) is coupled via a rotary mechanism of the central stalk subunits to proton translocation. Its function is as follows. Component of the F(0) channel, it forms part of the peripheral stalk, linking F(1) to F(0). The b'-subunit is a diverged and duplicated form of b found in plants and photosynthetic bacteria. The sequence is that of ATP synthase subunit b', chloroplastic from Emiliania huxleyi (Coccolithophore).